Here is a 92-residue protein sequence, read N- to C-terminus: MTSSRFIITVIGSDRVGIVARITTVMASYNVNIVDISQTIMQGIFTMIMLAEAPKENFDLAAFQHAMDAEGKSLGVEVKVQHEDVFRFMHRI.

The ACT domain maps to 7–81; sequence IITVIGSDRV…KSLGVEVKVQ (75 aa).

Belongs to the UPF0237 family.

The sequence is that of UPF0237 protein MA_3235 from Methanosarcina acetivorans (strain ATCC 35395 / DSM 2834 / JCM 12185 / C2A).